A 249-amino-acid polypeptide reads, in one-letter code: Isoprenyl transferase (249 aa).

Residue aspartate 29 is part of the active site. A Mg(2+)-binding site is contributed by aspartate 29. Substrate is bound by residues 30–33, tryptophan 34, arginine 42, histidine 46, and 74–76; these read GNGR and STE. The Proton acceptor role is filled by asparagine 77. Substrate contacts are provided by residues tryptophan 78, arginine 80, arginine 197, and 203-205; that span reads RLS. Mg(2+) is bound at residue glutamate 216.

The protein belongs to the UPP synthase family. In terms of assembly, homodimer. Mg(2+) is required as a cofactor.

Catalyzes the condensation of isopentenyl diphosphate (IPP) with allylic pyrophosphates generating different type of terpenoids. This is Isoprenyl transferase from Gloeobacter violaceus (strain ATCC 29082 / PCC 7421).